The following is a 265-amino-acid chain: MNNAPIGIFDSGVGGLTVARVIMEQLPNESVIYIGDTANSPYGPKPIAQVRELSLAIGEELVRRGCKMIVIACNTATSAALRDLRERFDVPVLGVILPAVRRAVSTTRNGKIGVIGTEGTIKSGAYQELFAASPSVEVHAQACPSFVSFVERGITSGRQILGVAQGYVEPLQAAGVDTLVLGCTHYPLLTGVIQLAMGDRVTLVSSAEETAKDVFKTLSMTDMLASEDSTPVRTFESTGDPVLFAQLAERFLGPHVTNVEKFAGM.

Substrate is bound by residues 10–11 (DS) and 42–43 (YG). C73 functions as the Proton donor/acceptor in the catalytic mechanism. 74–75 (NT) is a binding site for substrate. C183 serves as the catalytic Proton donor/acceptor. 184 to 185 (TH) contributes to the substrate binding site.

It belongs to the aspartate/glutamate racemases family.

It carries out the reaction L-glutamate = D-glutamate. The protein operates within cell wall biogenesis; peptidoglycan biosynthesis. Its function is as follows. Provides the (R)-glutamate required for cell wall biosynthesis. The chain is Glutamate racemase from Corynebacterium diphtheriae (strain ATCC 700971 / NCTC 13129 / Biotype gravis).